The primary structure comprises 136 residues: Plastocyanin (136 aa).

An N-terminal signal peptide occupies residues 1–34; it reads MSLVFNLVKRLQLILLSLVVGGLAVAFLSNPAAA. A Plastocyanin-like domain is found at 35–136; it reads ETYIVKMGSD…GMVGKIIVNG (102 aa). H73, C120, H123, and M128 together coordinate Cu cation.

The protein belongs to the plastocyanin family. Requires Cu(2+) as cofactor.

It localises to the cellular thylakoid membrane. Functionally, participates in electron transfer between P700 and the cytochrome b6-f complex in photosystem I. This is Plastocyanin from Synechococcus sp. (strain JA-2-3B'a(2-13)) (Cyanobacteria bacterium Yellowstone B-Prime).